The sequence spans 33 residues: VFCRFNGQQCTSDGQCCYGKCRTAFLRMICMGG.

3 cysteine pairs are disulfide-bonded: cysteine 3–cysteine 17, cysteine 10–cysteine 21, and cysteine 16–cysteine 30.

As to expression, expressed by the venom gland.

It localises to the secreted. Functionally, acts as a neurotoxin. The polypeptide is U13-ctenitoxin-Pn1c (Phoneutria nigriventer (Brazilian armed spider)).